Here is a 106-residue protein sequence, read N- to C-terminus: uncharacterized protein (106 aa).

The next 3 membrane-spanning stretches (helical) occupy residues 4–24 (LPVV…IGFL), 27–47 (MLLR…LFII), and 78–98 (VLIL…INML).

Its subcellular location is the cell membrane. This is an uncharacterized protein from Bacillus subtilis (strain 168).